The chain runs to 47 residues: Large ribosomal subunit protein bL34 (47 aa).

Residues 1 to 47 (MVTEGLKPHISIKKKKRKSGFLARMRTKSGRKIIARRRRKGRKRLAP) form a disordered region. A compositionally biased stretch (basic residues) spans 10–47 (ISIKKKKRKSGFLARMRTKSGRKIIARRRRKGRKRLAP).

This sequence belongs to the bacterial ribosomal protein bL34 family.

The chain is Large ribosomal subunit protein bL34 (rpmH) from Aquifex aeolicus (strain VF5).